A 454-amino-acid chain; its full sequence is Bifunctional protein GlmU (454 aa).

Residues 1–232 (MTDRTCLSIV…VDNVIGINNR (232 aa)) are pyrophosphorylase. Residues 11-14 (LAAG), Lys25, Gln78, and 83-84 (GT) each bind UDP-N-acetyl-alpha-D-glucosamine. Residue Asp108 participates in Mg(2+) binding. The UDP-N-acetyl-alpha-D-glucosamine site is built by Gly144, Glu158, Asn173, and Asn230. Asn230 serves as a coordination point for Mg(2+). The segment at 233-253 (AELAEAETIWQNRKRRELMLS) is linker. Positions 254-454 (GVTLIAPETV…AIKAAKSVSK (201 aa)) are N-acetyltransferase. UDP-N-acetyl-alpha-D-glucosamine-binding residues include Arg319 and Lys337. The Proton acceptor role is filled by His349. Residues Tyr352 and Asn363 each contribute to the UDP-N-acetyl-alpha-D-glucosamine site. Acetyl-CoA-binding positions include Ala366, 372 to 373 (NY), Ser391, Ser409, and Arg426.

The protein in the N-terminal section; belongs to the N-acetylglucosamine-1-phosphate uridyltransferase family. It in the C-terminal section; belongs to the transferase hexapeptide repeat family. As to quaternary structure, homotrimer. Mg(2+) is required as a cofactor.

The protein resides in the cytoplasm. It carries out the reaction alpha-D-glucosamine 1-phosphate + acetyl-CoA = N-acetyl-alpha-D-glucosamine 1-phosphate + CoA + H(+). The enzyme catalyses N-acetyl-alpha-D-glucosamine 1-phosphate + UTP + H(+) = UDP-N-acetyl-alpha-D-glucosamine + diphosphate. Its pathway is nucleotide-sugar biosynthesis; UDP-N-acetyl-alpha-D-glucosamine biosynthesis; N-acetyl-alpha-D-glucosamine 1-phosphate from alpha-D-glucosamine 6-phosphate (route II): step 2/2. It functions in the pathway nucleotide-sugar biosynthesis; UDP-N-acetyl-alpha-D-glucosamine biosynthesis; UDP-N-acetyl-alpha-D-glucosamine from N-acetyl-alpha-D-glucosamine 1-phosphate: step 1/1. The protein operates within bacterial outer membrane biogenesis; LPS lipid A biosynthesis. In terms of biological role, catalyzes the last two sequential reactions in the de novo biosynthetic pathway for UDP-N-acetylglucosamine (UDP-GlcNAc). The C-terminal domain catalyzes the transfer of acetyl group from acetyl coenzyme A to glucosamine-1-phosphate (GlcN-1-P) to produce N-acetylglucosamine-1-phosphate (GlcNAc-1-P), which is converted into UDP-GlcNAc by the transfer of uridine 5-monophosphate (from uridine 5-triphosphate), a reaction catalyzed by the N-terminal domain. In Brucella abortus (strain S19), this protein is Bifunctional protein GlmU.